A 157-amino-acid polypeptide reads, in one-letter code: Protein UXT (157 aa).

This sequence belongs to the UXT family. In terms of assembly, homohexamer. Component of the PAQosome complex which is responsible for the biogenesis of several protein complexes and which consists of R2TP complex members RUVBL1, RUVBL2, RPAP3 and PIH1D1, URI complex members PFDN2, PFDN6, PDRG1, UXT and URI1 as well as ASDURF, POLR2E and DNAAF10/WDR92. Interacts with LRPPRC. Interacts with androgen receptor AR (via N-terminus). Interacts with estrogen receptor ESR1; the interaction relocalizes ESR1 from the nucleus to the cytoplasm. In the nucleus, interacts specifically with RELA (via RHD domain) and forms a dynamic complex with NF-kappa-B and is recruited to the NF-kappa-B enhanceosome upon stimulation. Interacts with MECOM. Interacts with URI1. Part of complex I composed of TNF-alpha receptor TNFRSF1A, TRADD, TRAF2 and RIPK1 formed in response to TNF-alpha stimulation. Within the complex, interacts (via TPQE motif) with TRAF2; the interaction prevents the recruitment of FADD and CASP8/caspase 8 to complex I. Ubiquitinated by E3 ubiquitin-protein ligase complex containing FBXO7; leading to proteasomal degradation. As to expression, ubiquitous. Expressed in prostate epithelial cells. Expressed in mammary epithelial cells. Highest levels in the heart, skeletal muscle, pancreas, kidney, liver, adrenal gland, peripheral blood leukocytes, lymph node, prostate, and thyroid and the lowest levels in bladder and uterus. Overexpressed in a number of tumor tissues.

The protein localises to the cytoplasm. It localises to the nucleus. The protein resides in the cytoskeleton. It is found in the microtubule organizing center. Its subcellular location is the centrosome. The protein localises to the spindle pole. Involved in gene transcription regulation. Acts in concert with the corepressor URI1 to regulate androgen receptor AR-mediated transcription. Together with URI1, associates with chromatin to the NKX3-1 promoter region. Negatively regulates the transcriptional activity of the estrogen receptor ESR1 by inducing its translocation into the cytoplasm. May act as nuclear chaperone that facilitates the formation of the NF-kappa-B enhanceosome and thus positively regulates NF-kappa-B transcription activity. Potential component of mitochondrial-associated LRPPRC, a multidomain organizer that potentially integrates mitochondria and the microtubular cytoskeleton with chromosome remodeling. Increasing concentrations of UXT contributes to progressive aggregation of mitochondria and cell death potentially through its association with LRPPRC. Suppresses cell transformation and it might mediate this function by interaction and inhibition of the biological activity of cell proliferation and survival stimulatory factors like MECOM. Functionally, plays a role in protecting cells against TNF-alpha-induced apoptosis by preventing the recruitment of FADD and caspase 8 to the apoptotic complex I, composed of TRADD, TRAF2 and RIPK1/RIP. The sequence is that of Protein UXT (UXT) from Homo sapiens (Human).